Reading from the N-terminus, the 275-residue chain is Ribosomal RNA small subunit methyltransferase A (275 aa).

Positions 21, 23, 48, 69, 94, and 115 each coordinate S-adenosyl-L-methionine.

This sequence belongs to the class I-like SAM-binding methyltransferase superfamily. rRNA adenine N(6)-methyltransferase family. RsmA subfamily.

It localises to the cytoplasm. The catalysed reaction is adenosine(1518)/adenosine(1519) in 16S rRNA + 4 S-adenosyl-L-methionine = N(6)-dimethyladenosine(1518)/N(6)-dimethyladenosine(1519) in 16S rRNA + 4 S-adenosyl-L-homocysteine + 4 H(+). Specifically dimethylates two adjacent adenosines (A1518 and A1519) in the loop of a conserved hairpin near the 3'-end of 16S rRNA in the 30S particle. May play a critical role in biogenesis of 30S subunits. The chain is Ribosomal RNA small subunit methyltransferase A from Clostridium botulinum (strain Kyoto / Type A2).